Consider the following 476-residue polypeptide: Cysteine--tRNA ligase (476 aa).

Cys29 is a binding site for Zn(2+). Positions 31 to 41 (PTVYDYTHIGH) match the 'HIGH' region motif. Zn(2+) is bound by residues Cys209, His234, and Glu238. A 'KMSKS' region motif is present at residues 266-270 (KMSKS). An ATP-binding site is contributed by Lys269.

This sequence belongs to the class-I aminoacyl-tRNA synthetase family. It depends on Zn(2+) as a cofactor.

It localises to the cytoplasm. The catalysed reaction is tRNA(Cys) + L-cysteine + ATP = L-cysteinyl-tRNA(Cys) + AMP + diphosphate. The polypeptide is Cysteine--tRNA ligase (Thermococcus kodakarensis (strain ATCC BAA-918 / JCM 12380 / KOD1) (Pyrococcus kodakaraensis (strain KOD1))).